A 221-amino-acid polypeptide reads, in one-letter code: GTP cyclohydrolase 1 (221 aa).

Residues cysteine 109, histidine 112, and cysteine 180 each contribute to the Zn(2+) site.

The protein belongs to the GTP cyclohydrolase I family. In terms of assembly, toroid-shaped homodecamer, composed of two pentamers of five dimers.

It carries out the reaction GTP + H2O = 7,8-dihydroneopterin 3'-triphosphate + formate + H(+). The protein operates within cofactor biosynthesis; 7,8-dihydroneopterin triphosphate biosynthesis; 7,8-dihydroneopterin triphosphate from GTP: step 1/1. The polypeptide is GTP cyclohydrolase 1 (Sodalis glossinidius (strain morsitans)).